Here is a 20-residue protein sequence, read N- to C-terminus: Unknown protein NF028 from 2D-PAGE (20 aa).

This is Unknown protein NF028 from 2D-PAGE from Naegleria fowleri (Brain eating amoeba).